The primary structure comprises 67 residues: Conotoxin AbVIO (67 aa).

Positions 1 to 17 are cleaved as a signal peptide; sequence VIIIAVLFLTACQLIAT. The propeptide occupies 18 to 40; sequence ASYARSERKHPDLRLSSRNSKLS. Cystine bridges form between C43–C57, C50–C61, and C56–C66.

This sequence belongs to the conotoxin O1 superfamily. In terms of tissue distribution, expressed by the venom duct.

Its subcellular location is the secreted. This Conus abbreviatus (Abbreviated cone) protein is Conotoxin AbVIO.